Reading from the N-terminus, the 122-residue chain is Large ribosomal subunit protein uL24 (122 aa).

Residues 43 to 64 (IRKHHRRDMPTPQGGTTKGGII) are disordered.

Belongs to the universal ribosomal protein uL24 family. In terms of assembly, part of the 50S ribosomal subunit.

Functionally, one of two assembly initiator proteins, it binds directly to the 5'-end of the 23S rRNA, where it nucleates assembly of the 50S subunit. Its function is as follows. One of the proteins that surrounds the polypeptide exit tunnel on the outside of the subunit. This is Large ribosomal subunit protein uL24 from Cutibacterium acnes (strain DSM 16379 / KPA171202) (Propionibacterium acnes).